A 953-amino-acid polypeptide reads, in one-letter code: Coatomer subunit beta (953 aa).

Threonine 2 carries the N-acetylthreonine modification. HEAT repeat units lie at residues 96–131, 132–168, 240–276, 277–314, 316–353, and 396–433; these read HEMILVCDAYRKDLQHPNEFIRGSTLRFLCKLKEAE, LLEPLMPAIRACLEHRHSYVRRNAVLAIYTIYRNFEH, SERARFIRCIYNLLQSSSPAVKYEAAGTLVTLSSAPT, AIKAAAQCYIDLIIKESDNNVKLIVLDRLIELKEHPAH, RVLQDLVMDILRVLSTPDLEVRKKTLQLALDLVSSRNV, and DMAANVIPVLMEFLSDSNEAAAADVLEFVREAIQRFDN. Lysine 494 is subject to N6-acetyllysine.

In terms of assembly, oligomeric complex that consists of at least the alpha, beta, beta', gamma, delta, epsilon and zeta subunits. Interacts with ARF1 (myristoylated); this interaction is required for binding of COPB1 to Golgi membranes. Interacts with CAPN8 and PRKCE. Interacts with SCYL1. Interacts with COPG1. Interacts (via trunk domain) with ARF1 (via switch I region); the interaction is direct. Interacts with KCNK2 (via N-terminus); this interaction increases the channel-mediated whole cell currents and promotes plasma membrane expression of KCNK2. Interacts with STX17. Interacts with TMEM115. Interacts with TMEM41B. In terms of processing, proteolytically cleaved between Ser-528 and Ser-529 by CAPN8.

The protein resides in the cytoplasm. It is found in the cytosol. Its subcellular location is the golgi apparatus membrane. It localises to the cytoplasmic vesicle. The protein localises to the COPI-coated vesicle membrane. The protein resides in the cell membrane. It is found in the endoplasmic reticulum-Golgi intermediate compartment. Functionally, the coatomer is a cytosolic protein complex that binds to dilysine motifs and reversibly associates with Golgi non-clathrin-coated vesicles, which further mediate biosynthetic protein transport from the ER, via the Golgi up to the trans Golgi network. Coatomer complex is required for budding from Golgi membranes, and is essential for the retrograde Golgi-to-ER transport of dilysine-tagged proteins. In mammals, the coatomer can only be recruited by membranes associated to ADP-ribosylation factors (ARFs), which are small GTP-binding proteins; the complex also influences the Golgi structural integrity, as well as the processing, activity, and endocytic recycling of LDL receptors. Involved in the Golgi disassembly and reassembly processes during cell cycle. Plays a functional role in facilitating the transport of kappa-type opioid receptor mRNAs into axons and enhances translation of these proteins. Required for limiting lipid storage in lipid droplets. Involved in lipid homeostasis by regulating the presence of perilipin family members PLIN2 and PLIN3 at the lipid droplet surface and promoting the association of adipocyte surface triglyceride lipase (PNPLA2) with the lipid droplet to mediate lipolysis. Involved in autophagy by playing a role in early endosome function. Plays a role in organellar compartmentalization of secretory compartments including endoplasmic reticulum (ER)-Golgi intermediate compartment (ERGIC), Golgi, trans-Golgi network (TGN) and recycling endosomes, and in biosynthetic transport of CAV1. The sequence is that of Coatomer subunit beta (COPB1) from Bos taurus (Bovine).